Reading from the N-terminus, the 285-residue chain is AT-hook motif nuclear-localized protein 21 (285 aa).

The interval 17–95 (DGGGGGQFTT…GSKNKPKPPV (79 aa)) is disordered. The segment covering 39–50 (NHHHHHHNHNHH) has biased composition (basic residues). The span at 63–73 (GLGGGGGGGSG) shows a compositional bias: gly residues. A DNA-binding region (a.T hook) is located at residues 78-90 (RRPRGRPAGSKNK). Residues 102–238 (ANTLRAHILE…EHEEHLQSGG (137 aa)) enclose the PPC domain.

As to expression, preferentially expressed in roots, but also in flowers and leaves. Detected in the inflorescence meristem, floral primordia and developing reproductive organs.

The protein resides in the nucleus. It localises to the nucleoplasm. Transcription factor that specifically binds AT-rich DNA sequences related to the nuclear matrix attachment regions (MARs). Binds to the MARs present in the ETTIN (ETT) promoter leading to a negative regulation of its gene expression. Functions as a molecular node downstream of the homeotic protein AGAMOUS (AG), regulating patterning and differentiation of reproductive organs. Acts as a chromatin remodeling factor that modifies the architecture of ETTIN (ETT) chromatin by modulating H3 methylation leading to the regulation of ETT expression. Seems to be involved in the regulation of a set of reproductives genes including CRABS CLAW (CRC), JAGGED (JAG) and KNUCKLES (KNU). In Arabidopsis thaliana (Mouse-ear cress), this protein is AT-hook motif nuclear-localized protein 21.